We begin with the raw amino-acid sequence, 230 residues long: Ribonuclease 3 (230 aa).

The region spanning 5–127 is the RNase III domain; it reads HEHLARKLGI…ILGAVLRDQG (123 aa). Glu40 contacts Mg(2+). Residue Asp44 is part of the active site. Mg(2+)-binding residues include Asp113 and Glu116. The active site involves Glu116. The DRBM domain occupies 154–224; sequence DPKTRLQELM…AENMLSRLSD (71 aa). Residues 202–230 are disordered; sequence GEGSSRKKAEQQAAENMLSRLSDQSRFRV.

This sequence belongs to the ribonuclease III family. In terms of assembly, homodimer. It depends on Mg(2+) as a cofactor.

It is found in the cytoplasm. It carries out the reaction Endonucleolytic cleavage to 5'-phosphomonoester.. Functionally, digests double-stranded RNA. Involved in the processing of primary rRNA transcript to yield the immediate precursors to the large and small rRNAs (23S and 16S). Processes some mRNAs, and tRNAs when they are encoded in the rRNA operon. Processes pre-crRNA and tracrRNA of type II CRISPR loci if present in the organism. This is Ribonuclease 3 from Methylococcus capsulatus (strain ATCC 33009 / NCIMB 11132 / Bath).